Consider the following 591-residue polypeptide: Aspartate--tRNA(Asp/Asn) ligase (591 aa).

Residue glutamate 174 coordinates L-aspartate. Positions 198–201 (QLFK) are aspartate. L-aspartate is bound at residue arginine 220. Residues 220-222 (RDE) and glutamine 229 contribute to the ATP site. Histidine 450 contacts L-aspartate. Glutamate 483 provides a ligand contact to ATP. Position 490 (arginine 490) interacts with L-aspartate. 535 to 538 (GLDR) contributes to the ATP binding site.

It belongs to the class-II aminoacyl-tRNA synthetase family. Type 1 subfamily. Homodimer.

It is found in the cytoplasm. It carries out the reaction tRNA(Asx) + L-aspartate + ATP = L-aspartyl-tRNA(Asx) + AMP + diphosphate. Aspartyl-tRNA synthetase with relaxed tRNA specificity since it is able to aspartylate not only its cognate tRNA(Asp) but also tRNA(Asn). Reaction proceeds in two steps: L-aspartate is first activated by ATP to form Asp-AMP and then transferred to the acceptor end of tRNA(Asp/Asn). This is Aspartate--tRNA(Asp/Asn) ligase from Azotobacter vinelandii (strain DJ / ATCC BAA-1303).